Consider the following 658-residue polypeptide: Phosphomethylpyrimidine synthase (658 aa).

Residues 1-22 form a disordered region; sequence MNNSTDAVNPAKKPQTRREKRE. Residues asparagine 248, methionine 277, tyrosine 306, histidine 342, 362 to 364, 403 to 406, and glutamate 442 each bind substrate; these read SRG and DGLR. Histidine 446 lines the Zn(2+) pocket. Position 469 (tyrosine 469) interacts with substrate. Residue histidine 510 participates in Zn(2+) binding. Residues cysteine 590, cysteine 593, and cysteine 598 each contribute to the [4Fe-4S] cluster site.

This sequence belongs to the ThiC family. Homodimer. The cofactor is [4Fe-4S] cluster.

It carries out the reaction 5-amino-1-(5-phospho-beta-D-ribosyl)imidazole + S-adenosyl-L-methionine = 4-amino-2-methyl-5-(phosphooxymethyl)pyrimidine + CO + 5'-deoxyadenosine + formate + L-methionine + 3 H(+). Its pathway is cofactor biosynthesis; thiamine diphosphate biosynthesis. Catalyzes the synthesis of the hydroxymethylpyrimidine phosphate (HMP-P) moiety of thiamine from aminoimidazole ribotide (AIR) in a radical S-adenosyl-L-methionine (SAM)-dependent reaction. The sequence is that of Phosphomethylpyrimidine synthase from Colwellia psychrerythraea (strain 34H / ATCC BAA-681) (Vibrio psychroerythus).